The following is a 125-amino-acid chain: Hydrogenase maturation factor HypA (125 aa).

Ni(2+) is bound at residue His-2. 4 residues coordinate Zn(2+): Cys-73, Cys-76, Cys-96, and Cys-99.

The protein belongs to the HypA/HybF family.

Involved in the maturation of [NiFe] hydrogenases. Required for nickel insertion into the metal center of the hydrogenase. This Methanobrevibacter smithii (strain ATCC 35061 / DSM 861 / OCM 144 / PS) protein is Hydrogenase maturation factor HypA.